We begin with the raw amino-acid sequence, 322 residues long: 26S proteasome non-ATPase regulatory subunit 7 (322 aa).

The MPN domain occupies 9–144 (VVVHPLVLLS…TEAYISVEEV (136 aa)). Residue lysine 180 forms a Glycyl lysine isopeptide (Lys-Gly) (interchain with G-Cter in ubiquitin) linkage. N6-acetyllysine occurs at positions 204, 214, 314, and 315. Residues 281–322 (ANRDAEKKEGQEKEDSKKDRKDDKEKEKEKSDVKKEEKKEKK) form a disordered region.

Belongs to the peptidase M67A family. As to quaternary structure, component of the 19S proteasome regulatory particle complex. The 26S proteasome consists of a 20S core particle (CP) and two 19S regulatory subunits (RP). The regulatory particle is made of a lid composed of 9 subunits including PSMD7, a base containing 6 ATPases and few additional components. Within the complex, PSMD7 interacts with subunit PSMD4 through their respective MPN domain. Interacts with TRIM5.

Component of the 26S proteasome, a multiprotein complex involved in the ATP-dependent degradation of ubiquitinated proteins. This complex plays a key role in the maintenance of protein homeostasis by removing misfolded or damaged proteins, which could impair cellular functions, and by removing proteins whose functions are no longer required. Therefore, the proteasome participates in numerous cellular processes, including cell cycle progression, apoptosis, or DNA damage repair. The polypeptide is 26S proteasome non-ATPase regulatory subunit 7 (PSMD7) (Bos taurus (Bovine)).